Consider the following 811-residue polypeptide: Transmembrane protease serine 6 (811 aa).

Residues 1–55 (MLLLFHSKRMPVAEAPQVAGGQGDGGDGEEAEPEGMFKACEDSKRKARGYLRLVP) are Cytoplasmic-facing. A helical; Signal-anchor for type II membrane protein membrane pass occupies residues 56–76 (LFVLLALLVLASAGVLLWYFL). Over 77–811 (GYKAEVMVSQ…VISWIQQVVT (735 aa)) the chain is Extracellular. Residues 84 to 209 (VSQVYSGSLR…EGLVILEASV (126 aa)) form the SEA domain. 6 N-linked (GlcNAc...) asparagine glycosylation sites follow: Asn-136, Asn-184, Asn-216, Asn-338, Asn-433, and Asn-453. CUB domains follow at residues 213–336 (AALN…QACE) and 335–452 (CEVN…YGLY). Cys-335 and Cys-366 are disulfide-bonded. 3 LDL-receptor class A domains span residues 457–489 (PCPG…ERNC), 490–526 (VCRA…EQCQ), and 530–567 (PCGT…EHCD). Cystine bridges form between Cys-458–Cys-470, Cys-464–Cys-480, Cys-474–Cys-489, Cys-491–Cys-503, Cys-497–Cys-516, Cys-510–Cys-525, Cys-531–Cys-543, Cys-538–Cys-557, Cys-551–Cys-566, and Cys-602–Cys-618. A glycan (N-linked (GlcNAc...) asparagine) is linked at Asn-518. Residues 577–811 (IVGGAVSSEG…VISWIQQVVT (235 aa)) form the Peptidase S1 domain. Catalysis depends on charge relay system residues His-617 and Asp-668. Cystine bridges form between Cys-702–Cys-768, Cys-733–Cys-747, and Cys-758–Cys-787. Ser-762 (charge relay system) is an active-site residue.

This sequence belongs to the peptidase S1 family. Interacts with HJV. The single-chain zymogen undergoes autoproteolytic processing. This results in TMPRSS6 shedding from the cell surface and conversion into an activated two-chains form which is released extracellularly. The process involves a trans-activation mechanism that requires TMPRSS6 oligomerization.

It is found in the cell membrane. Membrane-bound serine protease. Through the cleavage of cell surface hemojuvelin (HJV), a regulator of the expression of the iron absorption-regulating hormone hepicidin/HAMP, plays a role in iron homeostasis. The sequence is that of Transmembrane protease serine 6 (TMPRSS6) from Homo sapiens (Human).